Consider the following 320-residue polypeptide: Large ribosomal subunit protein uL10y (320 aa).

Positions 289–320 (AGGGAPAAAKVEEKEESDEEDYGGDFGLFDEE) are disordered. Acidic residues predominate over residues 302–320 (KEESDEEDYGGDFGLFDEE). The residue at position 305 (Ser-305) is a Phosphoserine. Tyr-310 is modified (phosphotyrosine).

The protein belongs to the universal ribosomal protein uL10 family. In terms of assembly, P0 forms a pentameric complex by interaction with dimers of P1 and P2.

Its function is as follows. Ribosomal protein P0 is the functional equivalent of E.coli protein L10. The polypeptide is Large ribosomal subunit protein uL10y (RPP0B) (Arabidopsis thaliana (Mouse-ear cress)).